A 31-amino-acid polypeptide reads, in one-letter code: Toxin BmKK12 (31 aa).

Gln1 is subject to Pyrrolidone carboxylic acid. 3 disulfides stabilise this stretch: Cys4–Cys20, Cys10–Cys25, and Cys14–Cys27. Pro31 is subject to Proline amide.

Belongs to the short scorpion toxin superfamily. Potassium channel inhibitor family. Alpha-KTx 17 subfamily. The N-terminus is blocked. In terms of tissue distribution, expressed by the venom gland.

The protein localises to the secreted. Its function is as follows. Blocker of potassium channels (Kv). In Olivierus martensii (Manchurian scorpion), this protein is Toxin BmKK12.